Consider the following 408-residue polypeptide: Arginine deiminase (408 aa).

Cysteine 397 functions as the Amidino-cysteine intermediate in the catalytic mechanism.

It belongs to the arginine deiminase family.

Its subcellular location is the cytoplasm. It carries out the reaction L-arginine + H2O = L-citrulline + NH4(+). It functions in the pathway amino-acid degradation; L-arginine degradation via ADI pathway; carbamoyl phosphate from L-arginine: step 1/2. This is Arginine deiminase from Listeria innocua serovar 6a (strain ATCC BAA-680 / CLIP 11262).